A 30-amino-acid polypeptide reads, in one-letter code: Uperin-6.2 (30 aa).

In terms of tissue distribution, expressed by the skin dorsal glands.

It is found in the secreted. The chain is Uperin-6.2 from Uperoleia inundata (Floodplain toadlet).